The primary structure comprises 391 residues: Probable dual-specificity RNA methyltransferase RlmN (391 aa).

The interval 1–33 is disordered; sequence MTTPLDTPTREPLPLAPAGPGKLVMSAPRRGKP. Residues 12 to 21 show a composition bias toward low complexity; the sequence is PLPLAPAGPG. Glu124 functions as the Proton acceptor in the catalytic mechanism. Residues 130-373 form the Radical SAM core domain; the sequence is YKNRDTICIS…TTVRDTRGSD (244 aa). Residues Cys137 and Cys378 are joined by a disulfide bond. Residues Cys144, Cys148, and Cys151 each coordinate [4Fe-4S] cluster. S-adenosyl-L-methionine contacts are provided by residues 199–200, Ser233, 256–258, and Asn335; these read GE and SLH. The S-methylcysteine intermediate role is filled by Cys378.

Belongs to the radical SAM superfamily. RlmN family. [4Fe-4S] cluster is required as a cofactor.

The protein resides in the cytoplasm. The catalysed reaction is adenosine(2503) in 23S rRNA + 2 reduced [2Fe-2S]-[ferredoxin] + 2 S-adenosyl-L-methionine = 2-methyladenosine(2503) in 23S rRNA + 5'-deoxyadenosine + L-methionine + 2 oxidized [2Fe-2S]-[ferredoxin] + S-adenosyl-L-homocysteine. The enzyme catalyses adenosine(37) in tRNA + 2 reduced [2Fe-2S]-[ferredoxin] + 2 S-adenosyl-L-methionine = 2-methyladenosine(37) in tRNA + 5'-deoxyadenosine + L-methionine + 2 oxidized [2Fe-2S]-[ferredoxin] + S-adenosyl-L-homocysteine. Specifically methylates position 2 of adenine 2503 in 23S rRNA and position 2 of adenine 37 in tRNAs. The sequence is that of Probable dual-specificity RNA methyltransferase RlmN from Kineococcus radiotolerans (strain ATCC BAA-149 / DSM 14245 / SRS30216).